Reading from the N-terminus, the 245-residue chain is Anti-Pycsar protein Apyc1 (245 aa).

Residues 19-219 (FNNNALLYAG…EIQSQILLKH (201 aa)) form a beta-lactamase-like region. Residues H61, H63, D65, H66, H145, D165, and H219 each coordinate Zn(2+).

Belongs to the anti-Pycsar protein Apyc1 family. Homodimer. Zn(2+) serves as cofactor.

It carries out the reaction 3',5'-cyclic CMP + H2O = CMP + H(+). The catalysed reaction is 3',5'-cyclic UMP + H2O = UMP + H(+). Functionally, counteracts the endogenous Pycsar antiviral defense system. Phosphodiesterase that enables metal-dependent hydrolysis of host cyclic nucleotide Pycsar defense signals such as cCMP and cUMP. The polypeptide is Anti-Pycsar protein Apyc1 (Paenibacillus sp. (strain J14)).